A 214-amino-acid chain; its full sequence is Adenylate kinase (214 aa).

Residue 10–15 (GAGKGT) coordinates ATP. An NMP region spans residues 30-59 (STGDMLRAAVKAGTPLGLEAKKVMDAGQLV). AMP-binding positions include T31, R36, 57–59 (QLV), 85–88 (GFPR), and Q92. The interval 122–159 (GRRVHPGSGRVYHVVFNPPKVEGKDDVTGEDLAIRPDD) is LID. ATP contacts are provided by residues R123 and 132-133 (VY). AMP contacts are provided by R156 and R167. Q200 is a binding site for ATP.

The protein belongs to the adenylate kinase family. Monomer.

It localises to the cytoplasm. It catalyses the reaction AMP + ATP = 2 ADP. Its pathway is purine metabolism; AMP biosynthesis via salvage pathway; AMP from ADP: step 1/1. Functionally, catalyzes the reversible transfer of the terminal phosphate group between ATP and AMP. Plays an important role in cellular energy homeostasis and in adenine nucleotide metabolism. The sequence is that of Adenylate kinase from Shewanella putrefaciens (strain CN-32 / ATCC BAA-453).